A 576-amino-acid chain; its full sequence is Adenine deaminase (576 aa).

The protein belongs to the metallo-dependent hydrolases superfamily. Adenine deaminase family. Mn(2+) serves as cofactor.

The catalysed reaction is adenine + H2O + H(+) = hypoxanthine + NH4(+). The polypeptide is Adenine deaminase (Syntrophobacter fumaroxidans (strain DSM 10017 / MPOB)).